The chain runs to 215 residues: Chaperone protein TorD (215 aa).

It belongs to the TorD/DmsD family. TorD subfamily.

The protein resides in the cytoplasm. Involved in the biogenesis of TorA. Acts on TorA before the insertion of the molybdenum cofactor and, as a result, probably favors a conformation of the apoenzyme that is competent for acquiring the cofactor. The protein is Chaperone protein TorD of Vibrio vulnificus (strain CMCP6).